The chain runs to 242 residues: Terpene cyclase cle7 (242 aa).

The next 7 helical transmembrane spans lie at 20–40, 50–69, 79–101, 117–137, 143–163, 172–192, and 207–227; these read LLLTLFSLSGTGWLINYITTI, GVSLVALTNNLAWELVFAIL, VILRSWLFVDIFVIYTTAKFARS, LFVLFGILGFFSGHWALSVLL, FYWSGMMCLVVMSGTALGILV, SYGMWFSRFVGSIFAVASLFL, and ILMRWFAGAFVVLDGLYGVCF.

Belongs to the paxB family.

Its subcellular location is the membrane. The protein operates within secondary metabolite biosynthesis; terpenoid biosynthesis. Functionally, non-reducing polyketide synthase; part of the cluster A that mediates the biosynthesis of chevalone E and its oxidized derivatives that possess a unique five-membered lactone ring and can synergistically enhance the cytotoxicity of doxorubicin (DOX) in breast cancer cells. Within the pathway, cle7 takes part to the biosynthesis of the molecular scaffold by catalyzing the cyclization of the prenyl group initiated by protonation and ring-opening of the epoxide to produce the chevalone E intermediate. The molecular scaffold is commonly biosynthesized by a series of enzymes including the non-reducing polyketide synthase (NR-PKS) cle1 that produces the alpha-pyrone triacetic acid lactone (TAL); The membrane-bound prenyltransferase cle5 that accepts TAL as its substrate to perform a C-3 geranylgeranylation reaction, in which the pathway-dedicated GGPS cle6 is required to provide GGPP, the other substrate of cle5; the FAD-dependent monooxygenase Cle3 that forms an (S)-epoxide ring at the terminal olefin of the geranylgeranyl group; and the terpene cyclase Cle7 that catalyzes the cyclization of the prenyl group that yields the pentacyclic pathway intermediate chevalone E. Chevalone E can derivatize into seven new oxidized analogs by the cytochrome P450 monooxygenases cle2 (acting at C-20) and cle4 (acting at C-11 and C-12). In Aspergillus versicolor, this protein is Terpene cyclase cle7.